A 387-amino-acid polypeptide reads, in one-letter code: MLHTTPSGLLIIDKPQGVTSFDAVAAVRGALHIKKVGHAGTLDPMATGTLVIAFGHATRLLNAIVAHDKTYEATIRLGLRTTTDDAEGEVLVDGEARSRWQTLSAQLTEGGQSGEPTALPTASWQDLLTRTIATNFTGDIEQVPNTFSAIKINGQRAYDLAREGKDVELKPRPVTISEFTVLDIRSGFVAGEQAAEPLREDANTGAIPALDVDVRISCSSGTYIRALARDLGKELGVGGYLTRLRRTRVGRFALPDDASGLIAPEAMLDTRTHTVTAHTDQKTFTNREGQTVTRNKCVLDTPEGLAGDERRNWLLDHALTMEQAARGAMPALDITPEEASELRFGRRIERTISEPTAAIVPQTHDVAAIIERANAHQAKPVTVFPLA.

Aspartate 43 serves as the catalytic Nucleophile.

This sequence belongs to the pseudouridine synthase TruB family. Type 1 subfamily.

The catalysed reaction is uridine(55) in tRNA = pseudouridine(55) in tRNA. Responsible for synthesis of pseudouridine from uracil-55 in the psi GC loop of transfer RNAs. The sequence is that of tRNA pseudouridine synthase B from Bifidobacterium longum (strain NCC 2705).